A 475-amino-acid polypeptide reads, in one-letter code: Aspartyl/glutamyl-tRNA(Asn/Gln) amidotransferase subunit B (475 aa).

Belongs to the GatB/GatE family. GatB subfamily. As to quaternary structure, heterotrimer of A, B and C subunits.

The enzyme catalyses L-glutamyl-tRNA(Gln) + L-glutamine + ATP + H2O = L-glutaminyl-tRNA(Gln) + L-glutamate + ADP + phosphate + H(+). It catalyses the reaction L-aspartyl-tRNA(Asn) + L-glutamine + ATP + H2O = L-asparaginyl-tRNA(Asn) + L-glutamate + ADP + phosphate + 2 H(+). In terms of biological role, allows the formation of correctly charged Asn-tRNA(Asn) or Gln-tRNA(Gln) through the transamidation of misacylated Asp-tRNA(Asn) or Glu-tRNA(Gln) in organisms which lack either or both of asparaginyl-tRNA or glutaminyl-tRNA synthetases. The reaction takes place in the presence of glutamine and ATP through an activated phospho-Asp-tRNA(Asn) or phospho-Glu-tRNA(Gln). The chain is Aspartyl/glutamyl-tRNA(Asn/Gln) amidotransferase subunit B from Hydrogenovibrio crunogenus (strain DSM 25203 / XCL-2) (Thiomicrospira crunogena).